A 376-amino-acid polypeptide reads, in one-letter code: MEKKDINIVNVNKSFDGVQILKDINLKIEQGEFFSIIGPSGCGKTTLLRMIAGFISPDSGAIYLGDENIVNLPPNLRNVNTIFQKYALFPHLNVFENVAFPLRLKKVDEKTINEEVNKYLKLVGLEEHSTKKVSQLSGGQQQRISIARALINKPGVLLLDEPLSALDAKLRQNLLIELDLIHDEVGITFIFITHDQQEALSISDRIAVMNAGKVLQVGTPAEVYEAPADTFVADFLGENNFFSGKVTEIINEELAKINLEGIGEIIIELDKKVKIGDKVTISLRPEKIKLSKNEIKKTKNYMNSAAVYVDEYIYSGFQSKYYVHLKNNEKLKFKIFMQHAAFFDDNDEKAIWWDEDAYITWDAYDGYLVEVESEKK.

In terms of domain architecture, ABC transporter spans isoleucine 6 to leucine 236. Glycine 38–threonine 45 is a binding site for ATP.

This sequence belongs to the ABC transporter superfamily. Spermidine/putrescine importer (TC 3.A.1.11.1) family. The complex is composed of two ATP-binding proteins (PotA), two transmembrane proteins (PotB and PotC) and a solute-binding protein (PotD).

The protein resides in the cell inner membrane. It carries out the reaction ATP + H2O + polyamine-[polyamine-binding protein]Side 1 = ADP + phosphate + polyamineSide 2 + [polyamine-binding protein]Side 1.. Functionally, part of the ABC transporter complex PotABCD involved in spermidine/putrescine import. Responsible for energy coupling to the transport system. This is Spermidine/putrescine import ATP-binding protein PotA from Fusobacterium nucleatum subsp. nucleatum (strain ATCC 25586 / DSM 15643 / BCRC 10681 / CIP 101130 / JCM 8532 / KCTC 2640 / LMG 13131 / VPI 4355).